The chain runs to 514 residues: Lysine--tRNA ligase (514 aa).

Mg(2+) is bound by residues Glu424 and Glu431.

It belongs to the class-II aminoacyl-tRNA synthetase family. As to quaternary structure, homodimer. The cofactor is Mg(2+).

Its subcellular location is the cytoplasm. The catalysed reaction is tRNA(Lys) + L-lysine + ATP = L-lysyl-tRNA(Lys) + AMP + diphosphate. The polypeptide is Lysine--tRNA ligase (Cupriavidus necator (strain ATCC 17699 / DSM 428 / KCTC 22496 / NCIMB 10442 / H16 / Stanier 337) (Ralstonia eutropha)).